The following is a 476-amino-acid chain: MSIRTPPRLLELAGRSLLRDQALAMSTLEELPTELFPPLFMEAFSRRRCEALKLMVQAWPFRRLPLRPLIKMPCLEAFQAVLDGLDALLTQGVHPRRWKLQVLDLQDVCENFWMVWSEAMAHGCFLNAKRNKKPVQDCPRMRGQQPLTVFVELWLKNRTLDEYLTCLLLWVKQRKDLLHLCCKKLKILGMPFRNIRSILKMVNLDCIQEVEVNCKWVLPILTQFTPYLGHMRNLQKLVLSHMDVSRYVSPEQKKEIVTQFTTQFLKLCCLQKLSMNSVSFLEGHLDQLLSCLKTSLKVLTITNCVLLESDLKHLSQCPSISQLKTLDLSGIRLTNYSLVPLQILLEKVAATLEYLDLDDCGIIDSQVNAILPALSRCFELNTFSFCGNPISMATLENLLSHTIILKNLCVELYPAPRESYDADGTLCWSRFPQIRAELMKRVRDLRHPKRILFCTDCCPDCGNRSFYDLEADQCCC.

Residues 97-124 (RWKLQVLDLQDVCENFWMVWSEAMAHGC) form an LRR 1; degenerate repeat. The stretch at 179 to 203 (HLCCKKLKILGMPFRNIRSILKMVN) is one LRR 2; degenerate repeat. The LRR 3; degenerate repeat unit spans residues 204 to 230 (LDCIQEVEVNCKWVLPILTQFTPYLGH). The stretch at 231–266 (MRNLQKLVLSHMDVSRYVSPEQKKEIVTQFTTQFLK) is one LRR 4; degenerate repeat. LRR repeat units lie at residues 267 to 292 (LCCLQKLSMNSVSFLEGHLDQLLSCL), 293 to 324 (KTSLKVLTITNCVLLESDLKHLSQCPSISQLK), 325 to 345 (TLDLSGIRLTNYSLVPLQILL), 349 to 376 (AATLEYLDLDDCGIIDSQVNAILPALSR), and 377 to 401 (CFELNTFSFCGNPISMATLENLLSH).

This sequence belongs to the PRAME family.

The polypeptide is PRAME family member 5 (Homo sapiens (Human)).